We begin with the raw amino-acid sequence, 327 residues long: DNA repair protein XRCC4 (327 aa).

The interaction with IFFO1 stretch occupies residues 1-211; that stretch reads MERKVSRISL…QLEKNLKPER (211 aa). Serine 53 is modified (phosphoserine). Coiled coils occupy residues 133–153 and 183–213; these read IAEK…LLRD and LNEK…ERET. Interaction with LIG4 regions lie at residues 179-210 and 179-211; these read FILV…LKPE and FILV…KPER. Serine 192 bears the Phosphoserine mark. Lysine 208 is covalently cross-linked (Glycyl lysine isopeptide (Lys-Gly) (interchain with G-Cter in SUMO)). Tyrosine 226 carries the post-translational modification Phosphotyrosine. Serine 229 is modified (phosphoserine). Residue threonine 230 is modified to Phosphothreonine. 2 positions are modified to phosphoserine: serine 249 and serine 253. A disordered region spans residues 255–327; sequence DVTDIAPSRK…RNSSPEDIFD (73 aa). The Nuclear localization signal signature appears at 263 to 268; that stretch reads RKRRHH. A Glycyl lysine isopeptide (Lys-Gly) (interchain with G-Cter in ubiquitin) cross-link involves residue lysine 289. Residues serine 294, serine 295, serine 308, and serine 313 each carry the phosphoserine modification. The span at 308–327 shows a compositional bias: polar residues; sequence SAGNMSLETLRNSSPEDIFD. Threonine 316 is subject to Phosphothreonine. 2 positions are modified to phosphoserine: serine 320 and serine 321.

The protein belongs to the XRCC4-XLF family. XRCC4 subfamily. Homodimer and homotetramer in solution. Interacts with NHEJ1/XLF; the interaction is direct and is mediated via a head-to-head interaction between N-terminal head regions. Interacts with LIG4; the LIG4-XRCC4 subcomplex has a 1:2 stoichiometry and XRCC4 is required for LIG4 stability. Component of the core long-range non-homologous end joining (NHEJ) complex (also named DNA-PK complex) composed of PRKDC, LIG4, XRCC4, XRCC6/Ku70, XRCC5/Ku86 and NHEJ1/XLF. Additional component of the NHEJ complex includes PAXX. Following autophosphorylation, PRKDC dissociates from DNA, leading to formation of the short-range NHEJ complex, composed of LIG4, XRCC4, XRCC6/Ku70, XRCC5/Ku86 and NHEJ1/XLF. Interacts with PRKDC; the interaction is direct. Interacts with XRCC6/Ku70; the interaction is direct. Interacts with APTX and APLF. Forms a heterotetramer with IFFO1; the interaction involves LIG4-free XRCC4 and leads to the relocalization of IFFO1 to the sites of DNA damage. Interacts with PNKP; mainly interacts with PNKP when phosphorylated at Thr-230, but is also able to interact at much lower level with PNKP when not unphosphorylated. Interacts with POLL (DNA polymerase lambda). In terms of assembly, interacts with XKR4; interacts with the processed form of XKR4, which is cleaved by caspase. Phosphorylated by PRKDC at the C-terminus in response to DNA damage; Ser-253 constitutes the main phosphorylation sites. Phosphorylations by PRKDC at the C-terminus of XRCC4 and NHEJ1/XLF are highly redundant and regulate ability of the XRCC4-NHEJ1/XLF subcomplex to bridge DNA. Phosphorylation by PRKDC does not prevent interaction with NHEJ1/XLF but disrupts ability to bridge DNA and promotes detachment from DNA. Phosphorylation at Ser-320 and Ser-321 by PRKDC promotes recognition by the SCF(FBXW7) complex and subsequent ubiquitination via 'Lys-63'-linked ubiquitin. Phosphorylation at Thr-230 by CK2 promotes interaction with PNKP; regulating PNKP activity and localization to DNA damage sites. Phosphorylation by CK2 promotes interaction with APTX. Post-translationally, ubiquitinated at Lys-289 by the SCF(FBXW7) complex via 'Lys-63'-linked ubiquitination, thereby promoting double-strand break repair: the SCF(FBXW7) complex specifically recognizes XRCC4 when phosphorylated at Ser-320 and Ser-321 by PRKDC, and 'Lys-63'-linked ubiquitination facilitates DNA non-homologous end joining (NHEJ) by enhancing association with XRCC5/Ku80 and XRCC6/Ku70. Monoubiquitinated. In terms of processing, undergoes proteolytic processing by caspase-3 (CASP3). This generates the protein XRCC4, C-terminus (XRCC4/C), which translocates to the cytoplasm and activates phospholipid scramblase activity of XKR4, thereby promoting phosphatidylserine exposure on apoptotic cell surface.

It localises to the nucleus. It is found in the chromosome. Its subcellular location is the cytoplasm. Functionally, DNA non-homologous end joining (NHEJ) core factor, required for double-strand break repair and V(D)J recombination. Acts as a scaffold protein that regulates recruitment of other proteins to DNA double-strand breaks (DSBs). Associates with NHEJ1/XLF to form alternating helical filaments that bridge DNA and act like a bandage, holding together the broken DNA until it is repaired. The XRCC4-NHEJ1/XLF subcomplex binds to the DNA fragments of a DSB in a highly diffusive manner and robustly bridges two independent DNA molecules, holding the broken DNA fragments in close proximity to one other. The mobility of the bridges ensures that the ends remain accessible for further processing by other repair factors. Plays a key role in the NHEJ ligation step of the broken DNA during DSB repair via direct interaction with DNA ligase IV (LIG4): the LIG4-XRCC4 subcomplex reseals the DNA breaks after the gap filling is completed. XRCC4 stabilizes LIG4, regulates its subcellular localization and enhances LIG4's joining activity. Binding of the LIG4-XRCC4 subcomplex to DNA ends is dependent on the assembly of the DNA-dependent protein kinase complex DNA-PK to these DNA ends. Promotes displacement of PNKP from processed strand break termini. In terms of biological role, acts as an activator of the phospholipid scramblase activity of XKR4. This form, which is generated upon caspase-3 (CASP3) cleavage, translocates into the cytoplasm and interacts with XKR4, thereby promoting phosphatidylserine scramblase activity of XKR4 and leading to phosphatidylserine exposure on apoptotic cell surface. This Cricetulus griseus (Chinese hamster) protein is DNA repair protein XRCC4.